Reading from the N-terminus, the 342-residue chain is Subtilisin-like serine protease Rho m 2.0101 (342 aa).

Positions 1-30 are cleaved as a propeptide — removed in mature form; that stretch reads TMELLEDLIEQVRQLPMVNFIEKNSLVHAN. In terms of domain architecture, Inhibitor I9 spans 1–30; the sequence is TMELLEDLIEQVRQLPMVNFIEKNSLVHAN. Positions 39–342 constitute a Peptidase S8 domain; the sequence is PWGLARISHR…GQNLTKFWGH (304 aa). Residues aspartate 75 and histidine 107 each act as charge relay system in the active site. Asparagine 137 and asparagine 171 each carry an N-linked (GlcNAc...) asparagine glycan. Serine 267 acts as the Charge relay system in catalysis. Residue asparagine 335 is glycosylated (N-linked (GlcNAc...) asparagine).

Belongs to the peptidase S8 family.

In terms of biological role, serine protease. The polypeptide is Subtilisin-like serine protease Rho m 2.0101 (Rhodotorula mucilaginosa (Yeast)).